Reading from the N-terminus, the 122-residue chain is Large ribosomal subunit protein uL14c (122 aa).

The protein belongs to the universal ribosomal protein uL14 family. As to quaternary structure, part of the 50S ribosomal subunit.

It is found in the plastid. It localises to the chloroplast. In terms of biological role, binds to 23S rRNA. In Panax ginseng (Korean ginseng), this protein is Large ribosomal subunit protein uL14c.